Consider the following 226-residue polypeptide: Glutathione S-transferase kappa 1 (226 aa).

16–18 (SPY) contributes to the glutathione binding site. Lys49 carries the N6-succinyllysine modification. Asn53 contributes to the glutathione binding site. Residues Lys71 and Lys85 each carry the N6-acetyllysine modification. Lys116 carries the post-translational modification N6-acetyllysine; alternate. At Lys116 the chain carries N6-succinyllysine; alternate. At Lys144 the chain carries N6-succinyllysine. Residue Lys158 is modified to N6-acetyllysine; alternate. Lys158 carries the N6-succinyllysine; alternate modification. An N6-acetyllysine mark is found at Lys165 and Lys169. Glutathione-binding positions include Leu183 and 200–201 (SD).

Belongs to the GST superfamily. Kappa family. As to quaternary structure, homodimer. In terms of tissue distribution, ubiquitous.

Its subcellular location is the peroxisome. The enzyme catalyses RX + glutathione = an S-substituted glutathione + a halide anion + H(+). In terms of biological role, glutathione S-transferase that catalyzes the conjugation of glutathione to exogenous and endogenous compounds. Significant glutathione conjugating activity is found only with the model substrate, 1-chloro-2,4-dinitrobenzene (CDNB). The polypeptide is Glutathione S-transferase kappa 1 (GSTK1) (Homo sapiens (Human)).